The following is a 459-amino-acid chain: Putrescine aminotransferase (459 aa).

Residues 150-151 (GT) and glutamine 274 contribute to the pyridoxal 5'-phosphate site. Lysine 300 bears the N6-(pyridoxal phosphate)lysine mark. Residue threonine 332 coordinates pyridoxal 5'-phosphate.

This sequence belongs to the class-III pyridoxal-phosphate-dependent aminotransferase family. Putrescine aminotransferase subfamily. The cofactor is pyridoxal 5'-phosphate.

It catalyses the reaction an alkane-alpha,omega-diamine + 2-oxoglutarate = an omega-aminoaldehyde + L-glutamate. The enzyme catalyses putrescine + 2-oxoglutarate = 1-pyrroline + L-glutamate + H2O. The catalysed reaction is cadaverine + 2-oxoglutarate = 5-aminopentanal + L-glutamate. It participates in amine and polyamine degradation; putrescine degradation; 4-aminobutanal from putrescine (transaminase route): step 1/1. Functionally, catalyzes the aminotransferase reaction from putrescine to 2-oxoglutarate, leading to glutamate and 4-aminobutanal, which spontaneously cyclizes to form 1-pyrroline. This is the first step in one of two pathways for putrescine degradation, where putrescine is converted into 4-aminobutanoate (gamma-aminobutyrate or GABA) via 4-aminobutanal. Also functions as a cadaverine transaminase in a a L-lysine degradation pathway to succinate that proceeds via cadaverine, glutarate and L-2-hydroxyglutarate. In Escherichia coli (strain SMS-3-5 / SECEC), this protein is Putrescine aminotransferase.